The primary structure comprises 555 residues: Potassium-transporting ATPase potassium-binding subunit (555 aa).

The next 10 helical transmembrane spans lie at 2–22 (IWVAVIITMLLFILVAKPTGI), 60–80 (QYALSLVLLNGFMIVVVYFIF), 130–150 (IGITFLMFAAPATTLALVMAF), 173–193 (VFLPIAFIAALVFVALGVPQT), 246–266 (MSNILQMMLMMLLPTALPFTY), 278–298 (ILFVSLFMVFLLGFITITTSE), 374–394 (AGFVNIIMYAIIAVFISGLMV), 412–432 (LIAVTILFHPLLILGFSALAL), 483–503 (LVMFLGRYFSLITMLAVAASL), and 525–545 (GIFIGTIVIVGALTFFPMLVL).

Belongs to the KdpA family. In terms of assembly, the system is composed of three essential subunits: KdpA, KdpB and KdpC.

The protein localises to the cell membrane. Part of the high-affinity ATP-driven potassium transport (or Kdp) system, which catalyzes the hydrolysis of ATP coupled with the electrogenic transport of potassium into the cytoplasm. This subunit binds the extracellular potassium ions and delivers the ions to the membrane domain of KdpB through an intramembrane tunnel. This is Potassium-transporting ATPase potassium-binding subunit from Bacillus cereus (strain G9842).